Here is a 515-residue protein sequence, read N- to C-terminus: Maturase K (515 aa).

It belongs to the intron maturase 2 family. MatK subfamily.

Its subcellular location is the plastid. The protein resides in the chloroplast. Usually encoded in the trnK tRNA gene intron. Probably assists in splicing its own and other chloroplast group II introns. This Pseudotsuga menziesii (Douglas-fir) protein is Maturase K.